Here is a 165-residue protein sequence, read N- to C-terminus: 6,7-dimethyl-8-ribityllumazine synthase (165 aa).

Residues Phe-22, 56-58 (SME), and 80-82 (AVI) each bind 5-amino-6-(D-ribitylamino)uracil. 85–86 (ET) is a binding site for (2S)-2-hydroxy-3-oxobutyl phosphate. Catalysis depends on His-88, which acts as the Proton donor. Phe-113 lines the 5-amino-6-(D-ribitylamino)uracil pocket. (2S)-2-hydroxy-3-oxobutyl phosphate is bound at residue Arg-127.

This sequence belongs to the DMRL synthase family.

The enzyme catalyses (2S)-2-hydroxy-3-oxobutyl phosphate + 5-amino-6-(D-ribitylamino)uracil = 6,7-dimethyl-8-(1-D-ribityl)lumazine + phosphate + 2 H2O + H(+). The protein operates within cofactor biosynthesis; riboflavin biosynthesis; riboflavin from 2-hydroxy-3-oxobutyl phosphate and 5-amino-6-(D-ribitylamino)uracil: step 1/2. Catalyzes the formation of 6,7-dimethyl-8-ribityllumazine by condensation of 5-amino-6-(D-ribitylamino)uracil with 3,4-dihydroxy-2-butanone 4-phosphate. This is the penultimate step in the biosynthesis of riboflavin. This is 6,7-dimethyl-8-ribityllumazine synthase from Thermotoga petrophila (strain ATCC BAA-488 / DSM 13995 / JCM 10881 / RKU-1).